The following is a 128-amino-acid chain: Diacylglycerol kinase (128 aa).

A divalent metal cation is bound at residue E34. The next 2 helical transmembrane spans lie at 35 to 55 (SAFR…SYLT) and 58 to 78 (FLEW…ELIN). E75 (proton acceptor) is an active-site residue. E82 contacts a divalent metal cation. A helical transmembrane segment spans residues 108–128 (LIGLIFWAFIWGRYLLTLYFN).

It belongs to the bacterial diacylglycerol kinase family. Requires Mg(2+) as cofactor.

Its subcellular location is the cell inner membrane. It carries out the reaction a 1,2-diacyl-sn-glycerol + ATP = a 1,2-diacyl-sn-glycero-3-phosphate + ADP + H(+). Catalyzes the ATP-dependent phosphorylation of sn-l,2-diacylglycerol (DAG) to phosphatidic acid. Involved in the recycling of diacylglycerol produced as a by-product during membrane-derived oligosaccharide (MDO) biosynthesis. In Helicobacter pylori (strain J99 / ATCC 700824) (Campylobacter pylori J99), this protein is Diacylglycerol kinase (dgkA).